The chain runs to 619 residues: Dynein axonemal intermediate chain 2 (619 aa).

WD repeat units follow at residues 214–254, 261–302, 362–401, 405–445, and 450–489; these read KPSS…LVAE, SHRD…EPTE, GHHG…SSIM, YHMA…CDPA, and VCDD…STLQ. The disordered stretch occupies residues 566–619; sequence EALKKKPKPKKASIEVEGEDELEDIAGEEEESGIIMGEDTGEDDMDEKNEGGAP. Acidic residues predominate over residues 581–597; it reads VEGEDELEDIAGEEEES.

The protein belongs to the dynein intermediate chain family. As to quaternary structure, consists of at least two heavy chains and a number of intermediate and light chains. Interacts with DNAAF2. Interacts with DNAAF6/PIH1D3. Interacts with HEATR2; probably involved in outer arm dynein assembly. Interacts with CFAP53.

The protein resides in the cytoplasm. It is found in the cytoskeleton. It localises to the cilium axoneme. Its subcellular location is the dynein axonemal particle. Functionally, part of the dynein complex of respiratory cilia. In Rattus norvegicus (Rat), this protein is Dynein axonemal intermediate chain 2 (Dnai2).